The chain runs to 350 residues: Putative deoxyribonuclease-2 (350 aa).

The protein belongs to the DNase II family.

The protein is Putative deoxyribonuclease-2 of Burkholderia thailandensis (strain ATCC 700388 / DSM 13276 / CCUG 48851 / CIP 106301 / E264).